We begin with the raw amino-acid sequence, 466 residues long: 3-isopropylmalate dehydratase large subunit (466 aa).

The [4Fe-4S] cluster site is built by Cys347, Cys407, and Cys410.

This sequence belongs to the aconitase/IPM isomerase family. LeuC type 1 subfamily. As to quaternary structure, heterodimer of LeuC and LeuD. It depends on [4Fe-4S] cluster as a cofactor.

It carries out the reaction (2R,3S)-3-isopropylmalate = (2S)-2-isopropylmalate. Its pathway is amino-acid biosynthesis; L-leucine biosynthesis; L-leucine from 3-methyl-2-oxobutanoate: step 2/4. Catalyzes the isomerization between 2-isopropylmalate and 3-isopropylmalate, via the formation of 2-isopropylmaleate. The chain is 3-isopropylmalate dehydratase large subunit from Escherichia coli O157:H7.